The sequence spans 650 residues: DNA mismatch repair protein MutL (650 aa).

The tract at residues 374 to 420 (SSLPDTQRSQRQPEKAASGQRSSVDAGLSQGSSAHRASQTGLGQSGN) is disordered. Polar residues predominate over residues 392–420 (GQRSSVDAGLSQGSSAHRASQTGLGQSGN).

The protein belongs to the DNA mismatch repair MutL/HexB family.

Its function is as follows. This protein is involved in the repair of mismatches in DNA. It is required for dam-dependent methyl-directed DNA mismatch repair. May act as a 'molecular matchmaker', a protein that promotes the formation of a stable complex between two or more DNA-binding proteins in an ATP-dependent manner without itself being part of a final effector complex. In Shewanella amazonensis (strain ATCC BAA-1098 / SB2B), this protein is DNA mismatch repair protein MutL.